A 159-amino-acid chain; its full sequence is ATP synthase subunit b (159 aa).

Residues 7 to 27 traverse the membrane as a helical segment; it reads DFIWTLINFFVLLFILKILLY.

This sequence belongs to the ATPase B chain family. As to quaternary structure, F-type ATPases have 2 components, F(1) - the catalytic core - and F(0) - the membrane proton channel. F(1) has five subunits: alpha(3), beta(3), gamma(1), delta(1), epsilon(1). F(0) has three main subunits: a(1), b(2) and c(10-14). The alpha and beta chains form an alternating ring which encloses part of the gamma chain. F(1) is attached to F(0) by a central stalk formed by the gamma and epsilon chains, while a peripheral stalk is formed by the delta and b chains.

It is found in the cell membrane. Its function is as follows. F(1)F(0) ATP synthase produces ATP from ADP in the presence of a proton or sodium gradient. F-type ATPases consist of two structural domains, F(1) containing the extramembraneous catalytic core and F(0) containing the membrane proton channel, linked together by a central stalk and a peripheral stalk. During catalysis, ATP synthesis in the catalytic domain of F(1) is coupled via a rotary mechanism of the central stalk subunits to proton translocation. In terms of biological role, component of the F(0) channel, it forms part of the peripheral stalk, linking F(1) to F(0). In Carboxydothermus hydrogenoformans (strain ATCC BAA-161 / DSM 6008 / Z-2901), this protein is ATP synthase subunit b.